A 657-amino-acid chain; its full sequence is MFGKGLVKKSLLFFSGVSTMAVFLVSCGATRIWESSIQLLVSNDEATLADKSFSEMSYEGIRRYFRSQKHIELPSPNSSLLQDGNGLWKRPGRTLSDRIATFKNIKNDGSDVIVATGFNQQEALQAISSDDRRYLADKNDLAKVGFIFVDGQIEKEYNVINKTPQFRSTPLNISSVAFRSDDGSFLTGVATAVYLNLNQDYFLKKNGATNNSSQDLTVSGFVGVPIPSTLSFLNGFRLGIAYFNEVIYTHLSDAETTSDNKSNSSSASNSVLVQLKQMQGNDKKIKKIKWISPKQGSDNNSNLSIDDHKSGSFSSTEPRATTIINNLLDKGVSAIIPVAGPQVNLAVNEVARRKAHTAIIGVDSAQELLDINQDAPDKDQLIKGNKKIIPFSSIKALDVAIENMLIAIQKGSDNNGYKGFGYNNIGTVGTSSVGISEAGYEFLIDPVFWKTTQSQGKSMATNMTNLKRLSSDDTNTKKALKEVSTHKNGSDKDGIIGKYSNLLTKKSTTVTAVAQKSMTDNNSGTEQKKNLSEVDTKKKEKESKGKTQSNGQDSGQQNGKETNDIISKYSKLLTMTTMNNKVMSSKKQSSDDNSFKKTSENGDWVIKGDELTKKKSTELPAFAKGADYPTFPTEAVSVINGSTALDGKGFKWSFKQI.

An N-terminal signal peptide occupies residues 1-26 (MFGKGLVKKSLLFFSGVSTMAVFLVS). The N-palmitoyl cysteine moiety is linked to residue Cys27. Cys27 carries S-diacylglycerol cysteine lipidation. 3 disordered regions span residues 291-316 (ISPKQGSDNNSNLSIDDHKSGSFSST), 468-496 (RLSSDDTNTKKALKEVSTHKNGSDKDGII), and 516-563 (KSMT…KETN). Polar residues predominate over residues 294 to 304 (KQGSDNNSNLS). The segment covering 469-495 (LSSDDTNTKKALKEVSTHKNGSDKDGI) has biased composition (basic and acidic residues). Over residues 516-525 (KSMTDNNSGT) the composition is skewed to polar residues. Residues 526–545 (EQKKNLSEVDTKKKEKESKG) are compositionally biased toward basic and acidic residues. Positions 546–559 (KTQSNGQDSGQQNG) are enriched in low complexity.

To T.pallidum TmpC.

It localises to the cell membrane. This is an uncharacterized protein from Mycoplasma pneumoniae (strain ATCC 29342 / M129 / Subtype 1) (Mycoplasmoides pneumoniae).